Here is a 551-residue protein sequence, read N- to C-terminus: Adenylosuccinate synthetase (551 aa).

GTP is bound by residues 131–137 (GDEGKGK) and 159–161 (GHT). D132 (proton acceptor) is an active-site residue. Residues D132 and G159 each contribute to the Mg(2+) site. Residues 132 to 135 (DEGK), 157 to 160 (NAGH), T248, R262, N339, T354, and R418 each bind IMP. H160 serves as the catalytic Proton donor. Residue 414–420 (TTTGRAR) participates in substrate binding. GTP contacts are provided by residues R420, 446 to 448 (KLD), and 528 to 530 (GVG).

Belongs to the adenylosuccinate synthetase family. Homodimer. Mg(2+) is required as a cofactor.

The protein resides in the cytoplasm. The enzyme catalyses IMP + L-aspartate + GTP = N(6)-(1,2-dicarboxyethyl)-AMP + GDP + phosphate + 2 H(+). It participates in purine metabolism; AMP biosynthesis via de novo pathway; AMP from IMP: step 1/2. In terms of biological role, plays an important role in the de novo pathway and in the salvage pathway of purine nucleotide biosynthesis. Catalyzes the first committed step in the biosynthesis of AMP from IMP. The sequence is that of Adenylosuccinate synthetase from Phytophthora infestans (strain T30-4) (Potato late blight agent).